The sequence spans 677 residues: Heat shock transcription factor (677 aa).

Disordered regions lie at residues 1-56 (MGHN…DDSN) and 115-164 (STSS…SQQP). 2 stretches are compositionally biased toward polar residues: residues 115–131 (STSSAAKLSDGDLTNAT) and 143–164 (QPSSESQSHSNGYHKQGQSQQP). The DNA-binding element occupies 193-297 (ARPAFVNKLW…EYLLENIVRQ (105 aa)). Positions 320 to 373 (ELETVKYNQLAIAEDLKRITKDNEMLWKENMMARERHQSQQQVLEKLLRFLSSV) are involved in trimerization. Composition is skewed to low complexity over residues 400 to 416 (NHMSNNNHNNTGNINPN) and 457 to 501 (RSMS…QGQQ). Disordered regions lie at residues 400 to 444 (NHMS…VPLQ), 457 to 541 (RSMS…NQYS), and 606 to 677 (KLNP…RRAA). Residues 466 to 677 (NLNQRQSPQN…NNGQKRRRAA (212 aa)) are activatory. Polar residues-rich tracts occupy residues 502 to 541 (FSYPIQGGNQMMNQLGSPIGTQVGSPVGSQYGNQYGNQYS) and 629 to 641 (FANTGGSGQSEQP). Over residues 650-669 (EELRNSRLHEPDRSFEEKNN) the composition is skewed to basic and acidic residues.

It belongs to the HSF family. In terms of assembly, homotrimer. Homotrimerization increases the affinity of HSF1 to DNA. Exhibits temperature-dependent phosphorylation.

It localises to the nucleus. In terms of biological role, DNA-binding transcription factor that specifically binds heat shock promoter elements (HSE) and activates transcription. The chain is Heat shock transcription factor from Kluyveromyces lactis (strain ATCC 8585 / CBS 2359 / DSM 70799 / NBRC 1267 / NRRL Y-1140 / WM37) (Yeast).